The chain runs to 412 residues: MLIPFLFKLTLPLASGIALSSCGTLPEADLGTAAGNQTSSEPTNSVEIVQANQPEIKAVPVIDGLEHPWGMAWLPNGDILITERPGRLRIVRDGVLDPEAIAGVVAVSTVSAQQLFASQQGGLLDIALHPRFAENRFVYFTYSHGTQQANRTRVARAVFDGEKLTDWQVIFEVGQTKPGGQHFGSRLTWLPDETLLVSIGDGGNPPVELEGDFIRQQAQNRASHLGKIIRINDDGTVPADNPFRNDPKAAPEVWSYGHRNIQGLAYDPVTQKVWATEHGSRGGDELNLIQKGKNYGWPVVSFSKEYSTDQPVAPATSRPDMVDPLQIWTPAIAPSGLTIYNGDRHPEWQGTIFAGGLVDRGIRHLRLDENNQIIDETTISIGQRVRDVRQGPDGHVYVLTDQNNGQLLRLES.

Belongs to the PQQ oxidoreductase GdhB family. It depends on pyrroloquinoline quinone as a cofactor.

This is an uncharacterized protein from Synechocystis sp. (strain ATCC 27184 / PCC 6803 / Kazusa).